A 334-amino-acid chain; its full sequence is tRNA dimethylallyltransferase (334 aa).

22 to 29 (GPTASGKT) is an ATP binding site. Position 24 to 29 (24 to 29 (TASGKT)) interacts with substrate.

This sequence belongs to the IPP transferase family. In terms of assembly, monomer. Mg(2+) is required as a cofactor.

It carries out the reaction adenosine(37) in tRNA + dimethylallyl diphosphate = N(6)-dimethylallyladenosine(37) in tRNA + diphosphate. Catalyzes the transfer of a dimethylallyl group onto the adenine at position 37 in tRNAs that read codons beginning with uridine, leading to the formation of N6-(dimethylallyl)adenosine (i(6)A). This Rhodopirellula baltica (strain DSM 10527 / NCIMB 13988 / SH1) protein is tRNA dimethylallyltransferase.